Here is a 154-residue protein sequence, read N- to C-terminus: Low molecular weight protein-tyrosine-phosphatase PtpA (154 aa).

Catalysis depends on Cys-8, which acts as the Nucleophile. Arg-14 is an active-site residue. Asp-120 serves as the catalytic Proton donor.

Belongs to the low molecular weight phosphotyrosine protein phosphatase family.

The catalysed reaction is O-phospho-L-tyrosyl-[protein] + H2O = L-tyrosyl-[protein] + phosphate. Its function is as follows. Dephosphorylates the phosphotyrosine-containing proteins. The protein is Low molecular weight protein-tyrosine-phosphatase PtpA (ptpA) of Staphylococcus haemolyticus (strain JCSC1435).